Here is a 69-residue protein sequence, read N- to C-terminus: MVTVTVDKNENLEKALKRFKRMIEKEAIIREWKRREYYEKPSTIRVKKEKAFKRKQAKKVRKLKQKTNR.

Positions 50–69 are disordered; the sequence is KAFKRKQAKKVRKLKQKTNR.

The protein belongs to the bacterial ribosomal protein bS21 family.

The protein is Small ribosomal subunit protein bS21 of Borrelia garinii subsp. bavariensis (strain ATCC BAA-2496 / DSM 23469 / PBi) (Borreliella bavariensis).